We begin with the raw amino-acid sequence, 66 residues long: Potassium channel toxin alpha-KTx 27.3 (66 aa).

The N-terminal stretch at 1–17 (MKLMWLLFLCVLAFSIA) is a signal peptide.

It belongs to the short scorpion toxin superfamily. Potassium channel inhibitor family. Alpha-KTx 27 subfamily. Contains 4 disulfide bonds. Expressed by the venom gland.

It is found in the secreted. This Lychas mucronatus (Chinese swimming scorpion) protein is Potassium channel toxin alpha-KTx 27.3.